The primary structure comprises 352 residues: Protein Wnt-3a (352 aa).

The first 18 residues, 1 to 18 (MASFGYFLFLCGLSQALS), serve as a signal peptide directing secretion. A disulfide bond links Cys-77 and Cys-88. 2 N-linked (GlcNAc...) asparagine glycosylation sites follow: Asn-87 and Asn-92. 10 cysteine pairs are disulfide-bonded: Cys-128–Cys-136, Cys-138–Cys-155, Cys-203–Cys-217, Cys-205–Cys-212, Cys-281–Cys-312, Cys-297–Cys-307, Cys-311–Cys-351, Cys-327–Cys-342, Cys-329–Cys-339, and Cys-334–Cys-335. Ser-209 carries the O-palmitoleoyl serine; by PORCN lipid modification. Asn-298 is a glycosylation site (N-linked (GlcNAc...) asparagine).

The protein belongs to the Wnt family. Post-translationally, palmitoleoylation is required for efficient binding to frizzled receptors. Depalmitoleoylation leads to inhibit the Wnt signaling pathway. Disulfide bonds have critical and distinct roles in secretion and activity. Loss of each conserved cysteine in WNT3A results in high molecular weight oxidized Wnt oligomers, which are formed through inter-Wnt disulfide bonding. As to expression, expressed in cornea. Isoform 1 is expressed in the primitive streak, dorsal neural tube, proximal otic vesicle, the apical ectodermal ridge and the epithelium of feather buds.

It is found in the secreted. The protein localises to the extracellular space. It localises to the extracellular matrix. Its subcellular location is the cytoplasm. In terms of biological role, ligand for members of the frizzled family of seven transmembrane receptors. Functions in the canonical Wnt signaling pathway that results in activation of transcription factors of the TCF/LEF family. Regulates chick apical ectodermal ridge formation. Required for normal embryonic mesoderm development and formation of caudal somites. Required for normal morphogenesis of the developing neural tube. The polypeptide is Protein Wnt-3a (WNT3A) (Gallus gallus (Chicken)).